We begin with the raw amino-acid sequence, 471 residues long: Zinc finger protein 385B (471 aa).

The tract at residues 1–93 is required for induction of apoptosis; it reads MNMANFLRGF…TGSTCHTTTL (93 aa). A Matrin-type 1 zinc finger spans residues 34–64; it reads SFCEVCNIQLNSAAQAQVHSNGKSHRKRVKQ. 2 disordered regions span residues 50-92 and 175-275; these read QVHS…HTTT and HYKG…TVVE. The segment covering 76 to 92 has biased composition (low complexity); sequence ASPSSNSSTGSTCHTTT. Positions 94 to 471 are interaction with p53/TP53; that stretch reads PALVRTPTLM…TPASILFAPY (378 aa). The Matrin-type 2 zinc finger occupies 157–187; it reads ISCNVCQLRFNSDSQAEAHYKGSKHAKKVKA. A compositionally biased stretch (polar residues) spans 206–220; that stretch reads ANPSCSITPITGNNS. Over residues 230–250 the composition is skewed to low complexity; sequence KASSSSQPSSSESGSFLLKSG. Residues 260 to 269 show a composition bias toward polar residues; the sequence is TSPSKSTNGA. The segment at 282–316 adopts a Matrin-type 3 zinc-finger fold; sequence KKLLYCSLCKVAVNSLSQLEAHNTGSKHKTMVEAR. The segment at 318–340 is disordered; that stretch reads GAGPIKSYPRPGSRLKMQNGSKG. The Matrin-type 4 zinc finger occupies 348-378; sequence FHCEICDVHVNSEIQLKQHISSRRHKDRVAG.

Interacts with p53/TP53; the interaction is direct. In terms of tissue distribution, detected in germinal center of lymph node (at protein level). Expressed in spleen, lymph node and tonsil.

The protein resides in the nucleus. May play a role in p53/TP53-mediated apoptosis. The sequence is that of Zinc finger protein 385B (ZNF385B) from Homo sapiens (Human).